The following is a 170-amino-acid chain: NADH-ubiquinone oxidoreductase chain 2 (170 aa).

4 helical membrane-spanning segments follow: residues 24 to 44, 67 to 87, 101 to 121, and 150 to 170; these read LLWMTYFLLYSLLSISIIMMF, FLIFLNLLSLGGLPPFLGFLP, LFILTISVCLTLITLYFYLRL, and LILNFISIGGLLMILMFYMIL.

Belongs to the complex I subunit 2 family.

The protein localises to the mitochondrion inner membrane. It catalyses the reaction a ubiquinone + NADH + 5 H(+)(in) = a ubiquinol + NAD(+) + 4 H(+)(out). Functionally, core subunit of the mitochondrial membrane respiratory chain NADH dehydrogenase (Complex I) that is believed to belong to the minimal assembly required for catalysis. Complex I functions in the transfer of electrons from NADH to the respiratory chain. The immediate electron acceptor for the enzyme is believed to be ubiquinone. This is NADH-ubiquinone oxidoreductase chain 2 (ND2) from Anopheles albimanus (New world malaria mosquito).